A 278-amino-acid polypeptide reads, in one-letter code: Putative transcription factor kapC (278 aa).

Positions 1-10 (MQPALAPAPH) are enriched in pro residues. The segment at 1–121 (MQPALAPAPH…QNRAAQRAFR (121 aa)) is disordered. The span at 56–68 (PTATTSPRDQNNI) shows a compositional bias: polar residues. The bZIP domain occupies 103-166 (PLSTSKRAAQ…EYVINLQSRL (64 aa)). Residues 104–127 (LSTSKRAAQNRAAQRAFRQRKESY) form a basic motif region. Positions 109–119 (RAAQNRAAQRA) are enriched in low complexity. Residues 131–162 (LEEQVKEYEVMSQEYKALQAENYQLREYVINL) form a leucine-zipper region. The interval 173 to 278 (VPELPGNIDL…PPTHGLPMVS (106 aa)) is disordered. Over residues 198 to 214 (PGQAGASAPPQGSPQSQ) the composition is skewed to low complexity. Positions 215 to 226 (VSIANDDMNSLN) are enriched in polar residues. Basic and acidic residues predominate over residues 254–269 (GRGDETADPSETKTEP).

The protein belongs to the bZIP family.

The protein resides in the nucleus. Its function is as follows. Putative transcription factor. In Emericella nidulans (strain FGSC A4 / ATCC 38163 / CBS 112.46 / NRRL 194 / M139) (Aspergillus nidulans), this protein is Putative transcription factor kapC (kapC).